The primary structure comprises 346 residues: Putative glycosyltransferase HI_0523 (346 aa).

It belongs to the glycosyltransferase 9 family.

This Haemophilus influenzae (strain ATCC 51907 / DSM 11121 / KW20 / Rd) protein is Putative glycosyltransferase HI_0523.